Reading from the N-terminus, the 162-residue chain is Gas vesicle protein I (162 aa).

Residues 1–162 are disordered; it reads MTGKQHQKHE…AERQRGGADE (162 aa). Composition is skewed to basic and acidic residues over residues 22 to 37 and 47 to 64; these read INRDKARSKLLRQREK and RQSEVRRGNQSKAQHDTQ. Composition is skewed to polar residues over residues 65 to 74 and 81 to 110; these read SETQRGTQSK and TGGTKNPTAHSTLPPQKTNAENAVRNSHST. Composition is skewed to basic and acidic residues over residues 122-142 and 151-162; these read ARERLYGLRLHRETTASEDKS and PKAERQRGGADE.

The protein belongs to the gas vesicle GvpI family. GvpF to GvpM interact with each other in vitro, and may form multi-subunit complex(es). Interacts with GvpC and GvpO.

Its subcellular location is the gas vesicle. In terms of biological role, proteins GvpF to GvpM might be involved in nucleating gas vesicle formation. A minor component of the gas vesicle. Gas vesicles are hollow, gas filled proteinaceous nanostructures found in some microorganisms. They allow positioning of halobacteria at the optimal depth for growth in the poorly aerated, shallow brine pools of their habitat. Functionally, expression of a 9.5 kb mc-vac DNA fragment containing 2 divergently transcribed regions (gvpD-gvpE-gvpF-gvpG-gvpH-gvpI-gvpJ-gvpK-gvpL-gvpM and gvpA-gvpC-gvpN-gvpO) allows H.volcanii to produce gas vesicles. The sequence is that of Gas vesicle protein I from Haloferax mediterranei (strain ATCC 33500 / DSM 1411 / JCM 8866 / NBRC 14739 / NCIMB 2177 / R-4) (Halobacterium mediterranei).